A 379-amino-acid polypeptide reads, in one-letter code: Galactose-1-phosphate uridylyltransferase (379 aa).

Positions 1–10 are enriched in basic and acidic residues; the sequence is MSHSGADPEQ. The segment at 1–20 is disordered; the sequence is MSHSGADPEQRQQASEADAM. C75 is a binding site for Zn(2+). UDP-alpha-D-glucose is bound by residues A81, 97 to 98, and N173; that span reads ND. H184 serves as a coordination point for Zn(2+). H186 acts as the Tele-UMP-histidine intermediate in catalysis. A UDP-alpha-D-glucose-binding site is contributed by Q188. Residues E202, H301, H319, and H321 each contribute to the Zn(2+) site. Residues 334–337 and 339–340 contribute to the UDP-alpha-D-glucose site; these read KFMV and YE.

Belongs to the galactose-1-phosphate uridylyltransferase type 1 family. As to quaternary structure, homodimer. It depends on Zn(2+) as a cofactor.

The enzyme catalyses alpha-D-galactose 1-phosphate + UDP-alpha-D-glucose = alpha-D-glucose 1-phosphate + UDP-alpha-D-galactose. It participates in carbohydrate metabolism; galactose metabolism. Plays an important role in galactose metabolism. The protein is Galactose-1-phosphate uridylyltransferase (Galt) of Mus musculus (Mouse).